The sequence spans 668 residues: DNA ligase (668 aa).

Residues 31 to 35, 80 to 81, and glutamate 111 each bind NAD(+); these read DYDFD and SL. Lysine 113 serves as the catalytic N6-AMP-lysine intermediate. NAD(+)-binding residues include arginine 134, glutamate 170, lysine 285, and lysine 309. Zn(2+)-binding residues include cysteine 403, cysteine 406, cysteine 421, and cysteine 427. One can recognise a BRCT domain in the interval 587-668; it reads NATEKFIGKT…EFITKLNESE (82 aa).

It belongs to the NAD-dependent DNA ligase family. LigA subfamily. It depends on Mg(2+) as a cofactor. The cofactor is Mn(2+).

It carries out the reaction NAD(+) + (deoxyribonucleotide)n-3'-hydroxyl + 5'-phospho-(deoxyribonucleotide)m = (deoxyribonucleotide)n+m + AMP + beta-nicotinamide D-nucleotide.. Functionally, DNA ligase that catalyzes the formation of phosphodiester linkages between 5'-phosphoryl and 3'-hydroxyl groups in double-stranded DNA using NAD as a coenzyme and as the energy source for the reaction. It is essential for DNA replication and repair of damaged DNA. The sequence is that of DNA ligase from Flavobacterium johnsoniae (strain ATCC 17061 / DSM 2064 / JCM 8514 / BCRC 14874 / CCUG 350202 / NBRC 14942 / NCIMB 11054 / UW101) (Cytophaga johnsonae).